The chain runs to 168 residues: Peptide deformylase 1 (168 aa).

Positions 91 and 133 each coordinate Fe cation. Residue glutamate 134 is part of the active site. Histidine 137 is a Fe cation binding site.

The protein belongs to the polypeptide deformylase family. It depends on Fe(2+) as a cofactor.

The enzyme catalyses N-terminal N-formyl-L-methionyl-[peptide] + H2O = N-terminal L-methionyl-[peptide] + formate. Removes the formyl group from the N-terminal Met of newly synthesized proteins. Requires at least a dipeptide for an efficient rate of reaction. N-terminal L-methionine is a prerequisite for activity but the enzyme has broad specificity at other positions. This Shewanella oneidensis (strain ATCC 700550 / JCM 31522 / CIP 106686 / LMG 19005 / NCIMB 14063 / MR-1) protein is Peptide deformylase 1.